The sequence spans 35 residues: Conotoxin Ca15a (35 aa).

4-hydroxyproline is present on Pro-8.

Contains 4 disulfide bonds. As to expression, expressed by the venom duct.

It is found in the secreted. This Conus caracteristicus (Characteristic cone) protein is Conotoxin Ca15a.